Reading from the N-terminus, the 288-residue chain is Putative sugar uptake protein gbs2116 (288 aa).

A run of 10 helical transmembrane segments spans residues 4–26, 33–50, 55–72, 85–107, 117–134, 154–171, 181–200, 207–229, 234–256, and 268–285; these read LLIA…KIGG, FGMT…WLFK, TASL…WSVG, VSVA…GALV, FILG…FYFS, FATI…AVLF, AVIL…FMKF, VVVK…LLAA, LAIA…ILFL, and VVMG…LGIV.

The protein belongs to the GRP transporter (TC 2.A.7.5) family.

Its subcellular location is the cell membrane. The protein is Putative sugar uptake protein gbs2116 of Streptococcus agalactiae serotype III (strain NEM316).